The chain runs to 304 residues: MLFEQIAANKRKTVFIVIGFFIFVLMVGAAIGIIVWNNYLNGLILAAVIGAFYILIMVMTSSSVVMAMNRAKRITSKEQAPVLWDTVESMAMVASIPMPKVYIMNDLSLNAFSAGISPEKGAVAVTQGLLDNLERYELEGVIAHEVSHIRNYDIRLSTISIALVAVIAILSDLAMRMIFWGSVTGSRNNRKNDNNSGGGAQLIIYIVALVFVVLAPIIATAIQFALSRNREYLADASAIELTRNPDGLIQALQKVSGDTKKMKEVSASSESIYFSSPLKSKKDKPGIFDSHPPISSRIERLENM.

2 helical membrane passes run 14-34 (VFIV…IGII) and 39-59 (YLNG…IMVM). Histidine 144 is a binding site for Zn(2+). Glutamate 145 is an active-site residue. Histidine 148 serves as a coordination point for Zn(2+). 2 helical membrane passes run 161-181 (IALV…IFWG) and 202-222 (LIIY…ATAI). Glutamate 231 is a Zn(2+) binding site. A disordered region spans residues 276–295 (SPLKSKKDKPGIFDSHPPIS).

The protein belongs to the peptidase M48B family. Zn(2+) is required as a cofactor.

It is found in the cell membrane. This Listeria welshimeri serovar 6b (strain ATCC 35897 / DSM 20650 / CCUG 15529 / CIP 8149 / NCTC 11857 / SLCC 5334 / V8) protein is Protease HtpX homolog.